The following is a 124-amino-acid chain: MSRVPDNLYYTKSHEWFLIENGVATVGITDYAQHQLTDIVYVDFPKNGEHKNKGETLLTIESVKSAEDVYSPVTGEIIEINRDLESKPELINEDPYKNWLVKIRLSNDNFDGMSGEEYKKYIGE.

The 82-residue stretch at 23 to 104 (VATVGITDYA…PYKNWLVKIR (82 aa)) folds into the Lipoyl-binding domain. Lysine 64 carries the N6-lipoyllysine modification.

Belongs to the GcvH family. The glycine cleavage system is composed of four proteins: P, T, L and H. (R)-lipoate is required as a cofactor.

Functionally, the glycine cleavage system catalyzes the degradation of glycine. The H protein shuttles the methylamine group of glycine from the P protein to the T protein. The protein is Probable glycine cleavage system H protein of Picrophilus torridus (strain ATCC 700027 / DSM 9790 / JCM 10055 / NBRC 100828 / KAW 2/3).